Consider the following 622-residue polypeptide: Gamma tubulin complex adapter SPC72 (622 aa).

Disordered stretches follow at residues 1–58 (MVRR…PALM) and 221–263 (DKEE…IHDS). A compositionally biased stretch (polar residues) spans 228–238 (LAQSSPAGSQL). The segment covering 239–250 (ESRDSPSSKEEN) has biased composition (basic and acidic residues).

As to quaternary structure, homooligomer. Interacts with CDC5, KAR1, KIN4, SPC97, SPC98, STU2 and TUB4. In terms of processing, phosphorylated by CDC5.

It localises to the cytoplasm. The protein resides in the cytoskeleton. The protein localises to the microtubule organizing center. Its subcellular location is the spindle pole body. Functionally, spindle pole body (SPB) component that acts as the gamma-tubulin complex-binding protein of the SPB outer plaque. Anchors cytoplasmic microtubules at the half bridge of the spindle pole body (SPB) and accordingly functions in nuclear position and spindle orientation, including anaphase spindle migration into the bud. Recruits KIN4 kinase to both SPBs when cytoplasmic microtubules are defective, to delay mitotic exit. Links cytoplasmic microtubules with spindle orientation checkpoint (SPOC) components and, therefore, could function as part of the sensors of spindle orientation defects. Required for cytoplasmic astral microtubule growth during mitosis. Is strictly required for mating and karyogamy. The sequence is that of Gamma tubulin complex adapter SPC72 (SPC72) from Saccharomyces cerevisiae (strain ATCC 204508 / S288c) (Baker's yeast).